Consider the following 630-residue polypeptide: Pentatricopeptide repeat-containing protein At1g63130, mitochondrial (630 aa).

The transit peptide at Met-1 to Lys-22 directs the protein to the mitochondrion. PPR repeat units follow at residues Ser-80 to His-114, Asn-115 to Pro-149, Asp-150 to Pro-184, Asp-185 to Pro-219, Asp-220 to Pro-254, Gly-255 to Pro-289, Asn-290 to Pro-324, Asn-325 to Pro-359, Asp-360 to Pro-394, Asn-395 to Gly-429, Asn-430 to Pro-464, Asp-465 to Pro-499, Asp-500 to Pro-534, Asn-535 to Pro-569, and Asp-570 to Gly-604.

Belongs to the PPR family. P subfamily.

The protein resides in the mitochondrion. The sequence is that of Pentatricopeptide repeat-containing protein At1g63130, mitochondrial from Arabidopsis thaliana (Mouse-ear cress).